The sequence spans 846 residues: Sucrose synthase 6 (846 aa).

The segment at 276–755 is GT-B glycosyltransferase; it reads CVFTVVIFSI…GLQRIYECYT (480 aa).

Belongs to the glycosyltransferase 1 family. Plant sucrose synthase subfamily.

It carries out the reaction an NDP-alpha-D-glucose + D-fructose = a ribonucleoside 5'-diphosphate + sucrose + H(+). Sucrose-cleaving enzyme that provides UDP-glucose and fructose for various metabolic pathways. The sequence is that of Sucrose synthase 6 (SUS6) from Oryza sativa subsp. japonica (Rice).